A 317-amino-acid polypeptide reads, in one-letter code: Porphobilinogen deaminase (317 aa).

Cys245 bears the S-(dipyrrolylmethanemethyl)cysteine mark.

This sequence belongs to the HMBS family. As to quaternary structure, monomer. It depends on dipyrromethane as a cofactor.

It catalyses the reaction 4 porphobilinogen + H2O = hydroxymethylbilane + 4 NH4(+). Its pathway is porphyrin-containing compound metabolism; protoporphyrin-IX biosynthesis; coproporphyrinogen-III from 5-aminolevulinate: step 2/4. It functions in the pathway porphyrin-containing compound metabolism; chlorophyll biosynthesis. In terms of biological role, tetrapolymerization of the monopyrrole PBG into the hydroxymethylbilane pre-uroporphyrinogen in several discrete steps. This Synechococcus sp. (strain CC9605) protein is Porphobilinogen deaminase.